Reading from the N-terminus, the 180-residue chain is E3 ubiquitin-protein ligase RNF5 (180 aa).

The residue at position 2 (Ala2) is an N-acetylalanine. The RING-type zinc finger occupies 27–68; it reads CNICLETAREAVVSVCGHLYCWPCLHQWLETRPERQECPVCK. Residues 79–110 are disordered; that stretch reads LYGRGSQKPQDPRLKTPPRPQGQRPAPESRGG. Ser84 is modified (phosphoserine). Thr94 carries the post-translational modification Phosphothreonine. Ser107 is modified (phosphoserine). Transmembrane regions (helical) follow at residues 118–138 and 160–180; these read GGFH…TTVF and SWQD…LLSI.

It belongs to the RNF5 family. In terms of assembly, interacts with PXN. Interacts with Salmonella typhimurium sopA. Interacts with JKAMP. Interacts with STING1; the interaction of endogenous proteins is dependent on viral infection. As to expression, widely expressed.

The protein resides in the cell membrane. It is found in the mitochondrion membrane. Its subcellular location is the endoplasmic reticulum membrane. The catalysed reaction is S-ubiquitinyl-[E2 ubiquitin-conjugating enzyme]-L-cysteine + [acceptor protein]-L-lysine = [E2 ubiquitin-conjugating enzyme]-L-cysteine + N(6)-ubiquitinyl-[acceptor protein]-L-lysine.. Its pathway is protein modification; protein ubiquitination. Its function is as follows. Membrane-bound E3 ubiquitin-protein ligase that mediates ubiquitination of target proteins. May function together with E2 ubiquitin-conjugating enzymes UBE2D1/UBCH5A and UBE2D2/UBC4. Mediates ubiquitination of PXN/paxillin,thereby regulating cell motility and localization of PXN/paxillin. Catalyzes ubiquitination of Salmonella type III secreted protein sopA. Mediates the 'Lys-63'-linked polyubiquitination of JKAMP thereby regulating JKAMP function by decreasing its association with components of the proteasome and ERAD; the ubiquitination appears to involve E2 ubiquitin-conjugating enzyme UBE2N. Mediates the 'Lys-48'-linked polyubiquitination of STING1 at 'Lys-150' leading to its proteasomal degradation; the ubiquitination occurs in mitochondria after viral transfection and regulates antiviral responses. Catalyzes ubiquitination and subsequent degradation of ATG4B, thereby inhibiting autophagy. This is E3 ubiquitin-protein ligase RNF5 from Homo sapiens (Human).